The primary structure comprises 1057 residues: mRNA export factor elf1 (1057 aa).

2 consecutive ABC transporter domains span residues 440-659 (IEEE…VKPE) and 692-1019 (LKMT…KKKL). Residues 477–484 (GHNGCGKS) and 726–733 (GPNGAGKS) contribute to the ATP site. Residue Ser-733 is modified to Phosphoserine. Positions 820 to 869 (RRVEALIGRQKLKKSFQYEIKWFGKPHKYNTWVSREILLENGFQKFVQAF) constitute a Chromo domain. The segment covering 1020–1036 (TRNEIKAKERRAREREL) has biased composition (basic and acidic residues). The tract at residues 1020-1057 (TRNEIKAKERRARERELAWLQSPKGTEKPKSFFSDDEE) is disordered. 2 positions are modified to phosphoserine: Ser-1041 and Ser-1053.

This sequence belongs to the ABC transporter superfamily. ABCF family. EF3 subfamily.

It is found in the cytoplasm. It localises to the nucleus. In terms of biological role, has a direct role in the mRNA export process. Appears to act within the rae1 mediated mRNA export pathway. The chain is mRNA export factor elf1 (elf1) from Schizosaccharomyces pombe (strain 972 / ATCC 24843) (Fission yeast).